A 59-amino-acid chain; its full sequence is Large ribosomal subunit protein uL30 (59 aa).

Belongs to the universal ribosomal protein uL30 family. As to quaternary structure, part of the 50S ribosomal subunit.

This is Large ribosomal subunit protein uL30 from Sulfurihydrogenibium sp. (strain YO3AOP1).